A 158-amino-acid chain; its full sequence is Large ribosomal subunit protein uL11 (158 aa).

It belongs to the universal ribosomal protein uL11 family. As to quaternary structure, part of the ribosomal stalk of the 50S ribosomal subunit. Interacts with L10 and the large rRNA to form the base of the stalk. L10 forms an elongated spine to which L12 dimers bind in a sequential fashion forming a multimeric L10(L12)X complex.

Its function is as follows. Forms part of the ribosomal stalk which helps the ribosome interact with GTP-bound translation factors. In Methanosphaerula palustris (strain ATCC BAA-1556 / DSM 19958 / E1-9c), this protein is Large ribosomal subunit protein uL11.